A 770-amino-acid polypeptide reads, in one-letter code: Protein PAT1 homolog 1 (770 aa).

The disordered stretch occupies residues 1 to 26 (MFRYESLEDCPLDEDEDAFQGLGEED). Positions 1 to 84 (MFRYESLEDC…EMDLLGDHEE (84 aa)) are region A; interaction with DDX6/RCK. Positions 1–397 (MFRYESLEDC…HRSSHQDHLR (397 aa)) are involved in nuclear foci localization. Residues 7–26 (LEDCPLDEDEDAFQGLGEED) are compositionally biased toward acidic residues. Residues 85–388 (NLAERLSKMV…LNGAGDRGSH (304 aa)) are region N; interaction with decapping machinery. The Nuclear export signal signature appears at 86–95 (LAERLSKMVI). Phosphoserine is present on Ser177. Thr178 is subject to Phosphothreonine. A phosphoserine mark is found at Ser179 and Ser184. Thr194 is subject to Phosphothreonine. An asymmetric dimethylarginine mark is found at Arg217, Arg223, and Arg263. Residues 223 to 397 (RYPAPYGERM…HRSSHQDHLR (175 aa)) form an involved in RNA-binding region. Phosphoserine is present on Ser278. Arg284 carries the asymmetric dimethylarginine modification. 2 disordered regions span residues 315 to 344 (FRAF…QNLR) and 360 to 400 (QHRR…RKDP). A compositionally biased stretch (pro residues) spans 324 to 337 (SATPPPQQHPPGPG). The span at 367-380 (QRQQQNRNQHRNLN) shows a compositional bias: low complexity. Arg385 is subject to Omega-N-methylarginine. The segment covering 385-400 (RGSHRSSHQDHLRKDP) has biased composition (basic and acidic residues). Residues 389-448 (RSSHQDHLRKDPYANLMLQREKDWVSKIQMMQLQSTDPYLDDFYYQNYFEKLEKLSAAEE) form a region H region. Residues 398 to 770 (KDPYANLMLQ…TKLQLVQGIR (373 aa)) form an involved in nuclear speckle localization region. Residues 449–770 (IQGDGPKKER…TKLQLVQGIR (322 aa)) are region C.

It belongs to the PAT1 family. Interacts (via region A) with DDX6/RCK. Interacts (via region H and region C) with LSM1 and LSM4. Interacts (via region N) with DCP1A, DCP2, EDC3, EDC4 and XRN1. Interacts with the CCR4-NOT complex. Interacts with the Lsm-containing SMN-Sm protein complex. Interacts with EIF4ENIF1/4E-T.

Its subcellular location is the cytoplasm. It is found in the P-body. The protein resides in the nucleus. It localises to the PML body. The protein localises to the nucleus speckle. In terms of biological role, RNA-binding protein involved in deadenylation-dependent decapping of mRNAs, leading to the degradation of mRNAs. Acts as a scaffold protein that connects deadenylation and decapping machinery. Required for cytoplasmic mRNA processing body (P-body) assembly. This chain is Protein PAT1 homolog 1 (PATL1), found in Pongo abelii (Sumatran orangutan).